The sequence spans 436 residues: Hydrogenobyrinate a,c-diamide synthase (436 aa).

Residues 244–435 (RIAVARDDAF…MHVIDFSGEA (192 aa)) form the GATase cobBQ-type domain. C327 functions as the Nucleophile in the catalytic mechanism.

The protein belongs to the CobB/CbiA family. Mg(2+) serves as cofactor.

It catalyses the reaction hydrogenobyrinate + 2 L-glutamine + 2 ATP + 2 H2O = hydrogenobyrinate a,c-diamide + 2 L-glutamate + 2 ADP + 2 phosphate + 2 H(+). It participates in cofactor biosynthesis; adenosylcobalamin biosynthesis; cob(II)yrinate a,c-diamide from precorrin-2 (aerobic route): step 9/10. In terms of biological role, catalyzes the ATP-dependent amidation of the two carboxylate groups at positions a and c of hydrogenobyrinate, using either L-glutamine or ammonia as the nitrogen source. The sequence is that of Hydrogenobyrinate a,c-diamide synthase from Brucella ovis (strain ATCC 25840 / 63/290 / NCTC 10512).